The following is a 474-amino-acid chain: Aspartyl/glutamyl-tRNA(Asn/Gln) amidotransferase subunit B (474 aa).

Belongs to the GatB/GatE family. GatB subfamily. In terms of assembly, heterotrimer of A, B and C subunits.

It catalyses the reaction L-glutamyl-tRNA(Gln) + L-glutamine + ATP + H2O = L-glutaminyl-tRNA(Gln) + L-glutamate + ADP + phosphate + H(+). It carries out the reaction L-aspartyl-tRNA(Asn) + L-glutamine + ATP + H2O = L-asparaginyl-tRNA(Asn) + L-glutamate + ADP + phosphate + 2 H(+). Allows the formation of correctly charged Asn-tRNA(Asn) or Gln-tRNA(Gln) through the transamidation of misacylated Asp-tRNA(Asn) or Glu-tRNA(Gln) in organisms which lack either or both of asparaginyl-tRNA or glutaminyl-tRNA synthetases. The reaction takes place in the presence of glutamine and ATP through an activated phospho-Asp-tRNA(Asn) or phospho-Glu-tRNA(Gln). In Methanospirillum hungatei JF-1 (strain ATCC 27890 / DSM 864 / NBRC 100397 / JF-1), this protein is Aspartyl/glutamyl-tRNA(Asn/Gln) amidotransferase subunit B.